Consider the following 259-residue polypeptide: Global transcriptional regulator CodY (259 aa).

The GAF domain stretch occupies residues 1–155 (MNLLAKTRKL…GATVVGMEIL (155 aa)). The H-T-H motif DNA-binding region spans 203-222 (ASKIADRVGITRSVIVNALR).

It belongs to the CodY family.

It is found in the cytoplasm. Its function is as follows. DNA-binding global transcriptional regulator which is involved in the adaptive response to starvation and acts by directly or indirectly controlling the expression of numerous genes in response to nutrient availability. During rapid exponential growth, CodY is highly active and represses genes whose products allow adaptation to nutrient depletion. In Exiguobacterium sibiricum (strain DSM 17290 / CCUG 55495 / CIP 109462 / JCM 13490 / 255-15), this protein is Global transcriptional regulator CodY.